Consider the following 477-residue polypeptide: Ribulose bisphosphate carboxylase large chain (477 aa).

Residues 1 to 2 constitute a propeptide that is removed on maturation; sequence MS. Residue proline 3 is modified to N-acetylproline. Lysine 14 carries the N6,N6,N6-trimethyllysine modification. The substrate site is built by asparagine 123 and threonine 173. The active-site Proton acceptor is the lysine 175. Position 177 (lysine 177) interacts with substrate. The Mg(2+) site is built by lysine 201, aspartate 203, and glutamate 204. Lysine 201 carries the post-translational modification N6-carboxylysine. The active-site Proton acceptor is the histidine 294. Arginine 295, histidine 327, and serine 379 together coordinate substrate.

Belongs to the RuBisCO large chain family. Type I subfamily. In terms of assembly, heterohexadecamer of 8 large chains and 8 small chains; disulfide-linked. The disulfide link is formed within the large subunit homodimers. It depends on Mg(2+) as a cofactor. In terms of processing, the disulfide bond which can form in the large chain dimeric partners within the hexadecamer appears to be associated with oxidative stress and protein turnover.

The protein resides in the plastid. Its subcellular location is the chloroplast. It catalyses the reaction 2 (2R)-3-phosphoglycerate + 2 H(+) = D-ribulose 1,5-bisphosphate + CO2 + H2O. The enzyme catalyses D-ribulose 1,5-bisphosphate + O2 = 2-phosphoglycolate + (2R)-3-phosphoglycerate + 2 H(+). RuBisCO catalyzes two reactions: the carboxylation of D-ribulose 1,5-bisphosphate, the primary event in carbon dioxide fixation, as well as the oxidative fragmentation of the pentose substrate in the photorespiration process. Both reactions occur simultaneously and in competition at the same active site. The protein is Ribulose bisphosphate carboxylase large chain of Hyophorbe lagenicaulis (Bottle palm).